The sequence spans 538 residues: Inositol-3-phosphate synthase (538 aa).

NAD(+)-binding residues include Gly74, Gly75, Asn76, Asn77, Asp150, Ser186, Val187, Gln197, Asp198, Arg200, Thr247, Ala248, Asn249, Thr250, Gly298, Ser299, Asp323, Ser326, Asn357, Asn358, Asp359, Lys372, Gly412, Asp413, Asp441, and Ser442.

It belongs to the myo-inositol 1-phosphate synthase family. As to quaternary structure, homotetramer. NAD(+) serves as cofactor.

The protein resides in the cytoplasm. It carries out the reaction D-glucose 6-phosphate = 1D-myo-inositol 3-phosphate. The protein operates within polyol metabolism; myo-inositol biosynthesis; myo-inositol from D-glucose 6-phosphate: step 1/2. Its function is as follows. Key enzyme in myo-inositol biosynthesis pathway that catalyzes the conversion of glucose 6-phosphate to 1-myo-inositol 1-phosphate in a NAD-dependent manner. Rate-limiting enzyme in the synthesis of all inositol-containing compounds. This is Inositol-3-phosphate synthase (INO1) from Candida glabrata (strain ATCC 2001 / BCRC 20586 / JCM 3761 / NBRC 0622 / NRRL Y-65 / CBS 138) (Yeast).